We begin with the raw amino-acid sequence, 434 residues long: Nucleobase transporter PlUacP (434 aa).

The next 12 helical transmembrane spans lie at 9–29 (LGFQ…LIVG), 39–59 (LAYL…LQVW), 63–83 (FFGI…GPMI), 93–113 (AIYG…GFFG), 118–138 (FFPP…LIPV), 159–179 (ALSF…TGFI), 181–201 (AISI…MGKV), 218–238 (FYFG…LVAI), 306–326 (VVIT…IAAL), 327–347 (TLLI…GMVV), 365–385 (LLII…PNLF), and 394–414 (ILTS…NFLF).

It belongs to the nucleobase:cation symporter-2 (NCS2) (TC 2.A.40) family.

It localises to the cell membrane. Inhibited by the proton gradient disruptor carbonyl cyanide m-chlorophenylhydrazone (CCCP), but not by the sodium gradient disruptor ouabain. Hypoxanthine, xanthine, cytosine and uric acid act as competitive inhibitors. Uptake of the purines adenine and guanine, and the pyrimidine uracil. Transport is probably proton-dependent. The sequence is that of Nucleobase transporter PlUacP from Paenibacillus larvae subsp. larvae (strain NRRL B-3650 / LMG 16245).